The chain runs to 437 residues: GTPase Obg (437 aa).

The Obg domain maps to 2–161; sequence SDFIDRALIT…RELQLELKVI (160 aa). Residues 162–335 enclose the OBG-type G domain; sequence ADVGLVGFPN…LQRRIVDILR (174 aa). GTP-binding positions include 168 to 175, 193 to 197, 214 to 217, 284 to 287, and 316 to 318; these read GFPNAGKS, FTTLS, DIPG, NKTD, and SAA. The Mg(2+) site is built by serine 175 and threonine 195. The 79-residue stretch at 355 to 433 folds into the OCT domain; the sequence is FSNIDPNDFW…IEKAELLWQD (79 aa).

Belongs to the TRAFAC class OBG-HflX-like GTPase superfamily. OBG GTPase family. In terms of assembly, monomer. The cofactor is Mg(2+).

The protein resides in the cytoplasm. Functionally, an essential GTPase which binds GTP, GDP and possibly (p)ppGpp with moderate affinity, with high nucleotide exchange rates and a fairly low GTP hydrolysis rate. Plays a role in control of the cell cycle, stress response, ribosome biogenesis and in those bacteria that undergo differentiation, in morphogenesis control. This is GTPase Obg from Herpetosiphon aurantiacus (strain ATCC 23779 / DSM 785 / 114-95).